The primary structure comprises 167 residues: Ribonuclease H (167 aa).

The 143-residue stretch at 1–143 folds into the RNase H type-1 domain; sequence MYKQIEIFTD…CDQLARKAAK (143 aa). Residues Asp-10, Glu-48, Asp-70, and Asp-135 each coordinate Mg(2+).

It belongs to the RNase H family. Monomer. Mg(2+) serves as cofactor.

The protein resides in the cytoplasm. It catalyses the reaction Endonucleolytic cleavage to 5'-phosphomonoester.. In terms of biological role, endonuclease that specifically degrades the RNA of RNA-DNA hybrids. This chain is Ribonuclease H, found in Blochmanniella floridana.